A 271-amino-acid chain; its full sequence is Putative phosphoenolpyruvate synthase regulatory protein (271 aa).

Residue G151–T158 coordinates ADP.

This sequence belongs to the pyruvate, phosphate/water dikinase regulatory protein family. PSRP subfamily.

It carries out the reaction [pyruvate, water dikinase] + ADP = [pyruvate, water dikinase]-phosphate + AMP + H(+). The catalysed reaction is [pyruvate, water dikinase]-phosphate + phosphate + H(+) = [pyruvate, water dikinase] + diphosphate. Functionally, bifunctional serine/threonine kinase and phosphorylase involved in the regulation of the phosphoenolpyruvate synthase (PEPS) by catalyzing its phosphorylation/dephosphorylation. This chain is Putative phosphoenolpyruvate synthase regulatory protein, found in Burkholderia multivorans (strain ATCC 17616 / 249).